A 114-amino-acid chain; its full sequence is U17-barytoxin-Tl1d (114 aa).

A signal peptide spans 1-20; it reads MKTIIVFLSLLVLATKFGDA. Positions 21 to 74 are excised as a propeptide; that stretch reads NEGVNQEQMKEVIQNEFREDFLNEMAAMSLLQQLEAIESTLLEKEADRNSRQKR. Cystine bridges form between Cys-75-Cys-88, Cys-82-Cys-93, and Cys-87-Cys-108.

Belongs to the neurotoxin 14 (magi-1) family. 03 (ICK-30-40) subfamily. As to expression, expressed by the venom gland.

The protein localises to the secreted. Functionally, ion channel inhibitor. This chain is U17-barytoxin-Tl1d, found in Trittame loki (Brush-footed trapdoor spider).